A 320-amino-acid polypeptide reads, in one-letter code: Delta-aminolevulinic acid dehydratase (320 aa).

Residues Cys119, Cys121, and Cys129 each contribute to the Zn(2+) site. Residue Lys194 is the Schiff-base intermediate with substrate of the active site. Residues Arg204 and Arg216 each contribute to the 5-aminolevulinate site. Position 232 (Glu232) interacts with Mg(2+). Lys247 (schiff-base intermediate with substrate) is an active-site residue. Ser273 contacts 5-aminolevulinate.

It belongs to the ALAD family. As to quaternary structure, homooctamer. Zn(2+) is required as a cofactor.

It carries out the reaction 2 5-aminolevulinate = porphobilinogen + 2 H2O + H(+). Its pathway is porphyrin-containing compound metabolism; protoporphyrin-IX biosynthesis; coproporphyrinogen-III from 5-aminolevulinate: step 1/4. Catalyzes an early step in the biosynthesis of tetrapyrroles. Binds two molecules of 5-aminolevulinate per subunit, each at a distinct site, and catalyzes their condensation to form porphobilinogen. In Methanothermus sociabilis, this protein is Delta-aminolevulinic acid dehydratase (hemB).